The chain runs to 372 residues: Putative isochorismate synthase MenF (372 aa).

The active-site Proton acceptor is the Lys-119. Glu-175 serves as the catalytic Proton donor. 2 residues coordinate Mg(2+): Glu-219 and Glu-356.

This sequence belongs to the isochorismate synthase family. Requires Mg(2+) as cofactor.

It carries out the reaction chorismate = isochorismate. Its pathway is quinol/quinone metabolism; 1,4-dihydroxy-2-naphthoate biosynthesis; 1,4-dihydroxy-2-naphthoate from chorismate: step 1/7. The protein operates within quinol/quinone metabolism; menaquinone biosynthesis. Its function is as follows. Catalyzes the conversion of chorismate to isochorismate. The protein is Putative isochorismate synthase MenF (menF) of Mycobacterium tuberculosis (strain CDC 1551 / Oshkosh).